Reading from the N-terminus, the 704-residue chain is Lebercilin (704 aa).

Over residues 1 to 14 (MGERARSPDIEQGK) the composition is skewed to basic and acidic residues. The tract at residues 1 to 80 (MGERARSPDI…VSPKAVPSKK (80 aa)) is disordered. Serine 7 is subject to Phosphoserine. Over residues 25–40 (SSDLGSSPQSSGPSSP) the composition is skewed to low complexity. Serine 48 is modified (phosphoserine). A compositionally biased stretch (basic and acidic residues) spans 49 to 63 (TREKNPKRHLSDNQV). A coiled-coil region spans residues 105-300 (KRVLSARLLK…KEKELDIKNI (196 aa)). Disordered stretches follow at residues 389–417 (QEGKYDEDEDPCSAKQEARKPESEWAREE) and 476–661 (ELQD…GDEE). Residues 404–417 (QEARKPESEWAREE) show a composition bias toward basic and acidic residues. Positions 448–479 (AQSVDKFEDEAERLKTEMLLAKLNEINKELQD) form a coiled coil. Positions 496–505 (SKLHSPDRST) are enriched in basic and acidic residues. The segment covering 570-591 (GKSNPPSQKSSLLDFQSNSSES) has biased composition (polar residues). The segment covering 592–608 (PSKDSLDLMSRKEKKAT) has biased composition (basic and acidic residues). Positions 617–627 (SASNTSVSSKS) are enriched in low complexity.

It belongs to the LCA5 family. In terms of assembly, interacts with NINL. Interacts with OFD1. Interacts with FAM161A. Interacts with components of the IFT complex B. In terms of tissue distribution, detected in several tissues.

It is found in the cytoplasm. It localises to the cytoskeleton. The protein localises to the cilium axoneme. The protein resides in the cilium basal body. Its subcellular location is the cell projection. It is found in the cilium. In terms of biological role, involved in intraflagellar protein (IFT) transport in photoreceptor cilia. This chain is Lebercilin (Lca5), found in Mus musculus (Mouse).